The following is a 95-amino-acid chain: Putative pterin-4-alpha-carbinolamine dehydratase (95 aa).

This sequence belongs to the pterin-4-alpha-carbinolamine dehydratase family.

It catalyses the reaction (4aS,6R)-4a-hydroxy-L-erythro-5,6,7,8-tetrahydrobiopterin = (6R)-L-erythro-6,7-dihydrobiopterin + H2O. The chain is Putative pterin-4-alpha-carbinolamine dehydratase from Thermosynechococcus vestitus (strain NIES-2133 / IAM M-273 / BP-1).